The primary structure comprises 643 residues: Tigger transposable element-derived protein 5 (643 aa).

Residues 1–50 form a disordered region; the sequence is MYSAGPPAVPAPRRCRRPPPGRPMQPPRPPAPAPVPAARPPPPAPGPRPR. A compositionally biased stretch (pro residues) spans 20–48; sequence PGRPMQPPRPPAPAPVPAARPPPPAPGPR. The region spanning 52 to 103 is the HTH psq-type domain; the sequence is AVKMAFRKAYSIKDKLQAIERVKGGERQASVCRDFGVPGGTLRGWLKDEPKL. 2 DNA-binding regions (H-T-H motif) span residues 79–99 and 150–183; these read QASV…WLKD and PLIQ…WQKR. An HTH CENPB-type domain is found at 117 to 190; sequence QRKKMRLANE…QKRHGISSQR (74 aa). Residues 197–236 are disordered; it reads PVAAGPAPGPPVKQEPAQPTRAGPLPDRAASTPAPAEGGY. The DDE-1 domain occupies 238–358; it reads DEQIYNANVT…LQQKAVLLVA (121 aa). The disordered stretch occupies residues 366–395; it reads EARMPALEESEETRRRCRPEPTGPPEELQT.

The protein belongs to the tigger transposable element derived protein family.

The protein localises to the nucleus. In Bos taurus (Bovine), this protein is Tigger transposable element-derived protein 5 (TIGD5).